The following is a 537-amino-acid chain: Pentatricopeptide repeat-containing protein At1g02370, mitochondrial (537 aa).

Residues 1–18 (MNFRNLIASGSRLGKRFC) constitute a mitochondrion transit peptide. 7 PPR repeats span residues 171 to 205 (HQST…NFVN), 206 to 240 (NSLP…GISP), 241 to 275 (CGVT…SEAK), 277 to 307 (TWNT…MEEK), 312 to 346 (NRDS…RPEV), 347 to 377 (NNLS…WESK), and 382 to 416 (DMRL…SKGP).

It belongs to the PPR family. P subfamily.

The protein resides in the mitochondrion. The sequence is that of Pentatricopeptide repeat-containing protein At1g02370, mitochondrial from Arabidopsis thaliana (Mouse-ear cress).